A 415-amino-acid polypeptide reads, in one-letter code: MFNRTTSTVANVDPELYAAIEQENRRQEDHIELIASENYTSPAVMAAQGSQLTNKYAEGYPGKRYYGGCEYVDVVEQLAIDRVKQLFGAEAANVQPNSGSQANQGVFFAMLKPGDTIMGMSLAHGGHLTHGSPVNMSGKWFNVVSYGLNENEDIDYEAAEQLAQEHKPKLIVAGASAFSLKIDFERLAKIAKSVGAYLMVDMAHYAGLIAAGVYPNPVPHADFVTTTTHKSLRGPRGGVILMKAEYEKPINSAIFPGIQGGPLMHVIAGKAVAFKEALSPEFKAYQEKVVENARVLAETLVKRGLRIVSGRTESHVMLVDLRAKNITGKAAEAALGAAHITVNKNAIPNDPEKPFVTSGVRLGSPAMTTRGFGVKEAEIVGNLIADVLEAPEDAATLERVRGQVAELTKRFPVYG.

(6S)-5,6,7,8-tetrahydrofolate is bound by residues Leu-122 and 126–128 (GHL). N6-(pyridoxal phosphate)lysine is present on Lys-230.

This sequence belongs to the SHMT family. In terms of assembly, homodimer. Pyridoxal 5'-phosphate is required as a cofactor.

Its subcellular location is the cytoplasm. The enzyme catalyses (6R)-5,10-methylene-5,6,7,8-tetrahydrofolate + glycine + H2O = (6S)-5,6,7,8-tetrahydrofolate + L-serine. It functions in the pathway one-carbon metabolism; tetrahydrofolate interconversion. It participates in amino-acid biosynthesis; glycine biosynthesis; glycine from L-serine: step 1/1. Catalyzes the reversible interconversion of serine and glycine with tetrahydrofolate (THF) serving as the one-carbon carrier. This reaction serves as the major source of one-carbon groups required for the biosynthesis of purines, thymidylate, methionine, and other important biomolecules. Also exhibits THF-independent aldolase activity toward beta-hydroxyamino acids, producing glycine and aldehydes, via a retro-aldol mechanism. In Burkholderia lata (strain ATCC 17760 / DSM 23089 / LMG 22485 / NCIMB 9086 / R18194 / 383), this protein is Serine hydroxymethyltransferase 2.